The following is a 157-amino-acid chain: Rieske domain-containing protein (157 aa).

Methionine 1 bears the N-acetylmethionine mark. Serine 6 is modified (phosphoserine). Rieske domains are found at residues 16-94 (SSVC…TGEG) and 17-131 (SVCV…NIYV). Residues cysteine 57, histidine 59, cysteine 80, and histidine 83 each coordinate [2Fe-2S] cluster.

It depends on [2Fe-2S] cluster as a cofactor.

The sequence is that of Rieske domain-containing protein (RFESD) from Homo sapiens (Human).